Reading from the N-terminus, the 361-residue chain is Peptide chain release factor 1 (361 aa).

Position 233 is an N5-methylglutamine (Gln-233). Residues 282-310 form a disordered region; it reads SKKQAERAQNRKSQVGSGDRSERIRTYNF.

This sequence belongs to the prokaryotic/mitochondrial release factor family. In terms of processing, methylated by PrmC. Methylation increases the termination efficiency of RF1.

Its subcellular location is the cytoplasm. Functionally, peptide chain release factor 1 directs the termination of translation in response to the peptide chain termination codons UAG and UAA. The polypeptide is Peptide chain release factor 1 (Treponema denticola (strain ATCC 35405 / DSM 14222 / CIP 103919 / JCM 8153 / KCTC 15104)).